We begin with the raw amino-acid sequence, 839 residues long: Molybdenum cofactor sulfurase (839 aa).

Lys-237 is modified (N6-(pyridoxal phosphate)lysine). The active site involves Cys-401. A compositionally biased stretch (polar residues) spans 651–662; the sequence is DQNYSQKQSPSM. Residues 651-678 are disordered; sequence DQNYSQKQSPSMPGSFPQAPSSPDPYPT. Residues 656–834 enclose the MOSC domain; that stretch reads QKQSPSMPGS…IMVGDAVTPS (179 aa).

Belongs to the class-V pyridoxal-phosphate-dependent aminotransferase family. MOCOS subfamily. Requires pyridoxal 5'-phosphate as cofactor.

It catalyses the reaction Mo-molybdopterin + L-cysteine + AH2 = thio-Mo-molybdopterin + L-alanine + A + H2O. It functions in the pathway cofactor biosynthesis; molybdopterin biosynthesis. Functionally, sulfurates the molybdenum cofactor. Sulfation of molybdenum is essential for xanthine dehydrogenase (XDH) and aldehyde oxidase (ADO) enzymes in which molybdenum cofactor is liganded by 1 oxygen and 1 sulfur atom in active form. The polypeptide is Molybdenum cofactor sulfurase (Emericella nidulans (strain FGSC A4 / ATCC 38163 / CBS 112.46 / NRRL 194 / M139) (Aspergillus nidulans)).